The sequence spans 296 residues: N-acetylmuramic acid 6-phosphate etherase 2 (296 aa).

Positions 55-218 constitute an SIS domain; sequence IVANFKAGGR…STASMVGIGK (164 aa). Glu-83 serves as the catalytic Proton donor. The active site involves Glu-114.

The protein belongs to the GCKR-like family. MurNAc-6-P etherase subfamily. As to quaternary structure, homodimer.

The enzyme catalyses N-acetyl-D-muramate 6-phosphate + H2O = N-acetyl-D-glucosamine 6-phosphate + (R)-lactate. Its pathway is amino-sugar metabolism; N-acetylmuramate degradation. Its function is as follows. Specifically catalyzes the cleavage of the D-lactyl ether substituent of MurNAc 6-phosphate, producing GlcNAc 6-phosphate and D-lactate. In Lactiplantibacillus plantarum (strain ATCC BAA-793 / NCIMB 8826 / WCFS1) (Lactobacillus plantarum), this protein is N-acetylmuramic acid 6-phosphate etherase 2.